The following is a 480-amino-acid chain: Peptidase S41 family protein ustP (480 aa).

The interval 78–97 (CMPNKKSRPPDPRPSLAVGK) is disordered. The peptidase S41 domain stretch occupies residues 134 to 336 (DVAVLQLPTF…LKQQGVRSIV (203 aa)).

This sequence belongs to the peptidase S41A family.

The protein operates within mycotoxin biosynthesis. Functionally, peptidase S41 family protein; part of the gene cluster that mediates the biosynthesis of the secondary metabolite ustiloxin B, an antimitotic tetrapeptide. First, ustA is processed by the subtilisin-like endoprotease Kex2 that is outside the ustiloxin B gene cluster, at the C-terminal side of Arg-Lys, after transfer to Golgi apparatus through the endoplasmic reticulum (ER). Cleavage by KEX2 generates 16 peptides YAIG-I to YAIG-XVI. To process the precursor peptide further, at least two peptidases are necessary to cleave the N-terminal and C-terminal sides of the Tyr-Ala-Ile-Gly core peptide which serves as backbone for the synthesis of ustiloxin B, through cyclization and modification of the tyrosine with a non-protein coding amino acid, norvaline. One of the two peptidases must be the serine peptidase ustP; and the other pepdidase is probably ustH. Macrocyclization of the core peptide derived from ustA requires the tyrosinase ustQ, as well as the homologous oxidases ustYa and ustYb, and leads to the production of the first cyclization product N-desmethylustiloxin F. For the formation of N-desmethylustiloxin F, three oxidation steps are required, hydroxylation at the benzylic position, hydroxylation at either the aromatic ring of Tyr or beta-position of Ile, and oxidative cyclization. UstQ may catalyze the oxidation of a phenol moiety, whereas the ustYa and ustYb are most likely responsible for the remaining two-step oxidations. N-desmethylustiloxin F is then methylated by ustM to yield ustiloxin F which in turn substrate of the cytochrome P450 monooxygenase ustC which catalyzes the formation of S-deoxyustiloxin H. The flavoprotein monooxygenases ustF1 and ustF2 then participate in the modification of the side chain of S-deoxyustiloxin H, leading to the synthesis of an oxime intermediate, via ustiloxin H. Finally, carboxylative dehydration performed by the cysteine desulfurase-like protein ustD yields ustiloxin B. The protein is Peptidase S41 family protein ustP of Aspergillus flavus (strain ATCC 200026 / FGSC A1120 / IAM 13836 / NRRL 3357 / JCM 12722 / SRRC 167).